A 1412-amino-acid chain; its full sequence is DNA-directed RNA polymerase subunit beta' (1412 aa).

Residues Cys70, Cys72, Cys85, and Cys88 each coordinate Zn(2+). Residues Asp460, Asp462, and Asp464 each coordinate Mg(2+). The Zn(2+) site is built by Cys814, Cys888, Cys895, and Cys898. The interval 1378-1412 is disordered; sequence EREAARQLANPFEDAPVTVDADAPQSDAGQEGSAE.

It belongs to the RNA polymerase beta' chain family. As to quaternary structure, the RNAP catalytic core consists of 2 alpha, 1 beta, 1 beta' and 1 omega subunit. When a sigma factor is associated with the core the holoenzyme is formed, which can initiate transcription. It depends on Mg(2+) as a cofactor. Zn(2+) is required as a cofactor.

The enzyme catalyses RNA(n) + a ribonucleoside 5'-triphosphate = RNA(n+1) + diphosphate. Its function is as follows. DNA-dependent RNA polymerase catalyzes the transcription of DNA into RNA using the four ribonucleoside triphosphates as substrates. The chain is DNA-directed RNA polymerase subunit beta' from Bordetella petrii (strain ATCC BAA-461 / DSM 12804 / CCUG 43448).